We begin with the raw amino-acid sequence, 378 residues long: Dual-specificity RNA methyltransferase RlmN (378 aa).

Glutamate 96 (proton acceptor) is an active-site residue. In terms of domain architecture, Radical SAM core spans 102-342; that stretch reads QGGRGTLCVS…VRTTRGDDID (241 aa). The cysteines at positions 109 and 345 are disulfide-linked. [4Fe-4S] cluster contacts are provided by cysteine 116, cysteine 120, and cysteine 123. Residues 170 to 171, serine 202, 224 to 226, and asparagine 302 each bind S-adenosyl-L-methionine; these read GE and SLH. Cysteine 345 acts as the S-methylcysteine intermediate in catalysis.

It belongs to the radical SAM superfamily. RlmN family. [4Fe-4S] cluster is required as a cofactor.

It localises to the cytoplasm. It catalyses the reaction adenosine(2503) in 23S rRNA + 2 reduced [2Fe-2S]-[ferredoxin] + 2 S-adenosyl-L-methionine = 2-methyladenosine(2503) in 23S rRNA + 5'-deoxyadenosine + L-methionine + 2 oxidized [2Fe-2S]-[ferredoxin] + S-adenosyl-L-homocysteine. The catalysed reaction is adenosine(37) in tRNA + 2 reduced [2Fe-2S]-[ferredoxin] + 2 S-adenosyl-L-methionine = 2-methyladenosine(37) in tRNA + 5'-deoxyadenosine + L-methionine + 2 oxidized [2Fe-2S]-[ferredoxin] + S-adenosyl-L-homocysteine. Its function is as follows. Specifically methylates position 2 of adenine 2503 in 23S rRNA and position 2 of adenine 37 in tRNAs. m2A2503 modification seems to play a crucial role in the proofreading step occurring at the peptidyl transferase center and thus would serve to optimize ribosomal fidelity. This Pseudomonas paraeruginosa (strain DSM 24068 / PA7) (Pseudomonas aeruginosa (strain PA7)) protein is Dual-specificity RNA methyltransferase RlmN.